A 656-amino-acid polypeptide reads, in one-letter code: Chaperone protein DnaK (656 aa).

Disordered stretches follow at residues 488–532 and 579–656; these read EMQE…DAVD and YQQQ…DEDE. Residues 492–513 show a composition bias toward basic and acidic residues; that stretch reads EAEKHAEEDEKRRERIEARNEA. A compositionally biased stretch (acidic residues) spans 523–532; sequence LLDENEDAVD. Over residues 584–635 the composition is skewed to gly residues; it reads GEGGAGAGAGAAGGMGGAGPGGMGGAGPGGMGGAGPGGMGGAGPGAGAGQQG. Positions 636–656 are enriched in acidic residues; sequence DGEEFVDADFEDVDDEDDEDE.

The protein belongs to the heat shock protein 70 family.

In terms of biological role, acts as a chaperone. This chain is Chaperone protein DnaK, found in Natronomonas pharaonis (strain ATCC 35678 / DSM 2160 / CIP 103997 / JCM 8858 / NBRC 14720 / NCIMB 2260 / Gabara) (Halobacterium pharaonis).